The following is a 310-amino-acid chain: Glycine-rich RNA-binding protein RZ1C (310 aa).

The RRM domain maps to 7–85; sequence SRIFVGGLSP…RVISVNRAEP (79 aa). Ser-15 bears the Phosphoserine mark. The disordered stretch occupies residues 82 to 120; it reads RAEPKLGRDDGESHGSRGGRDSGYSIAGKGSFGGGGGGG. Residues 83 to 101 show a composition bias toward basic and acidic residues; that stretch reads AEPKLGRDDGESHGSRGGR. A compositionally biased stretch (gly residues) spans 111-120; the sequence is GSFGGGGGGG. Residues 128–143 form a CCHC-type zinc finger; that stretch reads CFKCGRVGHWARDCPS. A disordered region spans residues 224–310; it reads RFAGGDRYSR…YPSSSTFDRY (87 aa). Composition is skewed to basic and acidic residues over residues 226–236 and 244–253; these read AGGDRYSRGSD and DKARSFERDI. The span at 261-273 shows a compositional bias: gly residues; sequence RYGGGRAGGPIRG. Ser-295 carries the post-translational modification Phosphoserine.

In terms of tissue distribution, expressed in roots, rosette and cauline leaves, stems, floral buds and flowers.

Its subcellular location is the nucleus. In terms of biological role, binds RNA and DNA sequences non-specifically. May be involved in tolerance to cold stress. The sequence is that of Glycine-rich RNA-binding protein RZ1C from Arabidopsis thaliana (Mouse-ear cress).